Here is a 409-residue protein sequence, read N- to C-terminus: Serine/threonine transporter SstT (409 aa).

The next 9 helical transmembrane spans lie at L15 to A35, F49 to I69, P82 to S102, A142 to I162, L193 to G213, L218 to F238, G301 to V321, V331 to I351, and L357 to V377.

This sequence belongs to the dicarboxylate/amino acid:cation symporter (DAACS) (TC 2.A.23) family.

It localises to the cell inner membrane. It catalyses the reaction L-serine(in) + Na(+)(in) = L-serine(out) + Na(+)(out). The catalysed reaction is L-threonine(in) + Na(+)(in) = L-threonine(out) + Na(+)(out). In terms of biological role, involved in the import of serine and threonine into the cell, with the concomitant import of sodium (symport system). This Pseudomonas fluorescens (strain ATCC BAA-477 / NRRL B-23932 / Pf-5) protein is Serine/threonine transporter SstT.